A 693-amino-acid chain; its full sequence is E3 ubiquitin-protein ligase MARCHF7 (693 aa).

Met-1 bears the N-acetylmethionine mark. 7 disordered regions span residues 1–43 (MESK…RDSS), 69–136 (ESEI…LGSF), 158–281 (LMDY…RRTT), 296–342 (FFSR…EGRA), 361–430 (LSQN…RDSN), 445–475 (AANR…RNPG), and 512–533 (WNST…PEKL). Composition is skewed to polar residues over residues 14-36 (VQPS…LNDS), 95-105 (SCTNCASTSAG), 112-132 (LNTV…SSMV), 167-184 (DFTT…SYSQ), and 192-215 (AVST…QTVP). Over residues 216 to 234 (SSRDSSRSSFRSHFSPRQS) the composition is skewed to low complexity. Residues 236–267 (SFRNSSHPAFSYFSSRNETPTISNSERGSSQR) are compositionally biased toward polar residues. Over residues 268–279 (PYRESSDNEGRR) the composition is skewed to basic and acidic residues. Positions 296-305 (FFSRRSSQDS) are enriched in low complexity. Positions 306–323 (LNTRSLSSENYISPRTLT) are enriched in polar residues. Ser-318 carries the phosphoserine modification. Residues 324–337 (SQSRNNGTSSSSDV) are compositionally biased toward low complexity. Ser-390 is subject to Phosphoserine. The segment covering 451–463 (ASGASSSAAAGGS) has biased composition (low complexity). The span at 517 to 533 (GKNDKAKSAPSRDPEKL) shows a compositional bias: basic and acidic residues. The segment at 546 to 616 (DDEEEGDLCR…ELCKEKLQLN (71 aa)) adopts an RING-CH-type zinc-finger fold. Residues Cys-554, Cys-557, Cys-572, Cys-574, His-582, Cys-585, Cys-606, and Cys-609 each contribute to the Zn(2+) site. Phosphothreonine is present on Thr-688. Ser-689 is modified (phosphoserine).

As to expression, expressed in brain, thymus, muscle and kidney.

It is found in the cytoplasm. It carries out the reaction S-ubiquitinyl-[E2 ubiquitin-conjugating enzyme]-L-cysteine + [acceptor protein]-L-lysine = [E2 ubiquitin-conjugating enzyme]-L-cysteine + N(6)-ubiquitinyl-[acceptor protein]-L-lysine.. Its pathway is protein modification; protein ubiquitination. Functionally, E3 ubiquitin-protein ligase which may specifically enhance the E2 activity of HIP2. E3 ubiquitin ligases accept ubiquitin from an E2 ubiquitin-conjugating enzyme in the form of a thioester and then directly transfer the ubiquitin to targeted substrates. May be involved in T-cell proliferation by regulating LIF secretion. May play a role in lysosome homeostasis. Promotes 'Lys-6', 'Lys-11' and 'Lys-63'-linked mixed polyubiquitination on ATG14 leading to the inhibition of autophagy by impairing the interaction between ATG14 and STX7. Participates in the dopamine-mediated negative regulation of the NLRP3 inflammasome by promoting its uibiquitination and subsequent degradation. In Mus musculus (Mouse), this protein is E3 ubiquitin-protein ligase MARCHF7 (Marchf7).